The following is a 409-amino-acid chain: Na(+)-translocating NADH-quinone reductase subunit F (409 aa).

A helical transmembrane segment spans residues Phe-5–Ile-25. Residues Gly-34–Val-128 form the 2Fe-2S ferredoxin-type domain. [2Fe-2S] cluster-binding residues include Cys-71, Cys-77, Cys-80, and Cys-112. The FAD-binding FR-type domain maps to Val-131–Lys-271.

It belongs to the NqrF family. In terms of assembly, composed of six subunits; NqrA, NqrB, NqrC, NqrD, NqrE and NqrF. Requires [2Fe-2S] cluster as cofactor. The cofactor is FAD.

It localises to the cell inner membrane. It carries out the reaction a ubiquinone + n Na(+)(in) + NADH + H(+) = a ubiquinol + n Na(+)(out) + NAD(+). Functionally, NQR complex catalyzes the reduction of ubiquinone-1 to ubiquinol by two successive reactions, coupled with the transport of Na(+) ions from the cytoplasm to the periplasm. The first step is catalyzed by NqrF, which accepts electrons from NADH and reduces ubiquinone-1 to ubisemiquinone by a one-electron transfer pathway. The polypeptide is Na(+)-translocating NADH-quinone reductase subunit F (Actinobacillus succinogenes (strain ATCC 55618 / DSM 22257 / CCUG 43843 / 130Z)).